Reading from the N-terminus, the 428-residue chain is Enolase 3 (428 aa).

Residue glutamine 163 participates in (2R)-2-phosphoglycerate binding. Residue glutamate 205 is the Proton donor of the active site. The Mg(2+) site is built by aspartate 242, glutamate 286, and aspartate 313. (2R)-2-phosphoglycerate-binding residues include lysine 338, arginine 367, serine 368, and lysine 389. Lysine 338 acts as the Proton acceptor in catalysis.

This sequence belongs to the enolase family. Mg(2+) is required as a cofactor.

Its subcellular location is the cytoplasm. The protein resides in the secreted. It localises to the cell surface. It catalyses the reaction (2R)-2-phosphoglycerate = phosphoenolpyruvate + H2O. Its pathway is carbohydrate degradation; glycolysis; pyruvate from D-glyceraldehyde 3-phosphate: step 4/5. Catalyzes the reversible conversion of 2-phosphoglycerate (2-PG) into phosphoenolpyruvate (PEP). It is essential for the degradation of carbohydrates via glycolysis. In Lactobacillus johnsonii (strain CNCM I-12250 / La1 / NCC 533), this protein is Enolase 3.